We begin with the raw amino-acid sequence, 602 residues long: Bifunctional ribose 1,5-bisphosphokinase-thymidine phosphorylase (602 aa).

The ribose 1,5-bisphosphokinase stretch occupies residues 1 to 187; the sequence is MKESGTFFLV…ALRNGANAGS (187 aa). The tract at residues 188-602 is thymidinephosphorylase; the sequence is VPQPASRRHL…ASTAVRVDPD (415 aa).

This sequence in the N-terminal section; belongs to the ribose 1,5-bisphosphokinase family. The protein in the C-terminal section; belongs to the thymidine/pyrimidine-nucleoside phosphorylase family. Type 2 subfamily.

It catalyses the reaction alpha-D-ribose 1,5-bisphosphate + ATP = 5-phospho-alpha-D-ribose 1-diphosphate + ADP. It carries out the reaction thymidine + phosphate = 2-deoxy-alpha-D-ribose 1-phosphate + thymine. Its pathway is metabolic intermediate biosynthesis; 5-phospho-alpha-D-ribose 1-diphosphate biosynthesis; 5-phospho-alpha-D-ribose 1-diphosphate from D-ribose 5-phosphate (route II): step 3/3. Functionally, catalyzes the phosphorylation of ribose 1,5-bisphosphate to 5-phospho-D-ribosyl alpha-1-diphosphate (PRPP). This Cupriavidus pinatubonensis (strain JMP 134 / LMG 1197) (Cupriavidus necator (strain JMP 134)) protein is Bifunctional ribose 1,5-bisphosphokinase-thymidine phosphorylase (phnN).